The primary structure comprises 421 residues: Core protease I7 homolog (421 aa).

Active-site residues include His242, Asp249, and Cys329.

Belongs to the peptidase C57 family.

Its subcellular location is the virion. Functionally, late protein responsible for processing most or all of the viral core and membrane proteins known to undergo morphogenesis-associated proteolysis. These proteolytic events are involved in the transformation of immature virions (IV) into mature virions (MV). The sequence is that of Core protease I7 homolog from Fowlpox virus (strain NVSL) (FPV).